A 434-amino-acid chain; its full sequence is UDP-N-acetylglucosamine 1-carboxyvinyltransferase (434 aa).

22–23 (KN) serves as a coordination point for phosphoenolpyruvate. Position 93 (arginine 93) interacts with UDP-N-acetyl-alpha-D-glucosamine. Catalysis depends on cysteine 117, which acts as the Proton donor. A 2-(S-cysteinyl)pyruvic acid O-phosphothioketal modification is found at cysteine 117. UDP-N-acetyl-alpha-D-glucosamine is bound by residues aspartate 307 and valine 329.

This sequence belongs to the EPSP synthase family. MurA subfamily.

It is found in the cytoplasm. It carries out the reaction phosphoenolpyruvate + UDP-N-acetyl-alpha-D-glucosamine = UDP-N-acetyl-3-O-(1-carboxyvinyl)-alpha-D-glucosamine + phosphate. The protein operates within cell wall biogenesis; peptidoglycan biosynthesis. Functionally, cell wall formation. Adds enolpyruvyl to UDP-N-acetylglucosamine. In Coxiella burnetii (strain CbuG_Q212) (Coxiella burnetii (strain Q212)), this protein is UDP-N-acetylglucosamine 1-carboxyvinyltransferase.